Consider the following 184-residue polypeptide: Orotate phosphoribosyltransferase (184 aa).

5-phospho-alpha-D-ribose 1-diphosphate-binding positions include arginine 99, lysine 100, lysine 103, histidine 105, and 125–133 (EDTTTTGNS). Orotate-binding residues include threonine 129 and arginine 157.

This sequence belongs to the purine/pyrimidine phosphoribosyltransferase family. PyrE subfamily. As to quaternary structure, homodimer. Requires Mg(2+) as cofactor.

It catalyses the reaction orotidine 5'-phosphate + diphosphate = orotate + 5-phospho-alpha-D-ribose 1-diphosphate. It participates in pyrimidine metabolism; UMP biosynthesis via de novo pathway; UMP from orotate: step 1/2. Catalyzes the transfer of a ribosyl phosphate group from 5-phosphoribose 1-diphosphate to orotate, leading to the formation of orotidine monophosphate (OMP). The polypeptide is Orotate phosphoribosyltransferase (Corynebacterium glutamicum (strain R)).